A 138-amino-acid polypeptide reads, in one-letter code: 1,4-dihydroxy-2-naphthoyl-CoA hydrolase (138 aa).

Residue Asp-13 is part of the active site.

It belongs to the 4-hydroxybenzoyl-CoA thioesterase family. DHNA-CoA hydrolase subfamily.

The enzyme catalyses 1,4-dihydroxy-2-naphthoyl-CoA + H2O = 1,4-dihydroxy-2-naphthoate + CoA + H(+). It functions in the pathway cofactor biosynthesis; phylloquinone biosynthesis. It participates in quinol/quinone metabolism; 1,4-dihydroxy-2-naphthoate biosynthesis; 1,4-dihydroxy-2-naphthoate from chorismate: step 7/7. Functionally, catalyzes the hydrolysis of 1,4-dihydroxy-2-naphthoyl-CoA (DHNA-CoA) to 1,4-dihydroxy-2-naphthoate (DHNA), a reaction involved in phylloquinone (vitamin K1) biosynthesis. This chain is 1,4-dihydroxy-2-naphthoyl-CoA hydrolase, found in Microcystis aeruginosa (strain NIES-843 / IAM M-2473).